We begin with the raw amino-acid sequence, 132 residues long: Small ribosomal subunit protein uS8 (132 aa).

This sequence belongs to the universal ribosomal protein uS8 family. Part of the 30S ribosomal subunit. Contacts proteins S5 and S12.

Functionally, one of the primary rRNA binding proteins, it binds directly to 16S rRNA central domain where it helps coordinate assembly of the platform of the 30S subunit. In Halalkalibacterium halodurans (strain ATCC BAA-125 / DSM 18197 / FERM 7344 / JCM 9153 / C-125) (Bacillus halodurans), this protein is Small ribosomal subunit protein uS8.